An 88-amino-acid chain; its full sequence is Co-chaperonin GroES (88 aa).

The protein belongs to the GroES chaperonin family. As to quaternary structure, heptamer of 7 subunits arranged in a ring. Interacts with the chaperonin GroEL.

It is found in the cytoplasm. Functionally, together with the chaperonin GroEL, plays an essential role in assisting protein folding. The GroEL-GroES system forms a nano-cage that allows encapsulation of the non-native substrate proteins and provides a physical environment optimized to promote and accelerate protein folding. GroES binds to the apical surface of the GroEL ring, thereby capping the opening of the GroEL channel. The polypeptide is Co-chaperonin GroES (Treponema pallidum (strain Nichols)).